We begin with the raw amino-acid sequence, 199 residues long: MAVAGPEIERLIQLLARLPGLGPRSARRAALHLIKKREALMVPLASAMQVAIERIQVCKTCGNIDTQSPCTVCTDPRRDPAMIVVVADVADLWALERAKASNGRYHVLGGTLSPLDGVGPQDLTIDALVQRAHAPEVSEIILALNATVDGQTTAHYITDLLQEANVKVTRLAHGVPVGGELDYLDEGTLSAAMRQRTLF.

The C4-type zinc-finger motif lies at 58-73 (CKTCGNIDTQSPCTVC). A Toprim domain is found at 81 to 176 (AMIVVVADVA…KVTRLAHGVP (96 aa)).

This sequence belongs to the RecR family.

In terms of biological role, may play a role in DNA repair. It seems to be involved in an RecBC-independent recombinational process of DNA repair. It may act with RecF and RecO. The chain is Recombination protein RecR from Bradyrhizobium sp. (strain BTAi1 / ATCC BAA-1182).